The following is a 412-amino-acid chain: Protein MITOFERRINLIKE 1, chloroplastic (412 aa).

The transit peptide at 1-92 directs the protein to the chloroplast; that stretch reads MEARLSETLG…PGPEFLKWIK (92 aa). Residues 43-83 are disordered; the sequence is VRNPKLKTKSSQKPPKFSANFRRSDPPFASTSISDPTHEKP. Solcar repeat units follow at residues 112–198, 206–288, and 298–392; these read ERAI…GKSL, PTVL…LKAA, and LEPL…ARLT. 6 helical membrane-spanning segments follow: residues 115–135, 167–187, 208–228, 262–282, 303–323, and 365–385; these read IIGAGAGGLAGAFTYVTLLPL, ILGFYSGVSAVIVGSTFSSAV, VLIPPTAGAMGNIISSAIMVP, AGYSATLLRNLPAGVLSYSSF, SVCCGALAGAISASITTPLDV, and TRGMGPRVVHSACFSAIGYFA.

The protein belongs to the mitochondrial carrier (TC 2.A.29) family. As to expression, expressed in leaves, developing flowers and siliques.

Its subcellular location is the plastid. It is found in the chloroplast inner membrane. Functionally, probably involved in iron transport into chloroplasts. This is Protein MITOFERRINLIKE 1, chloroplastic (MFL1) from Arabidopsis thaliana (Mouse-ear cress).